Here is a 504-residue protein sequence, read N- to C-terminus: Putative F-box/FBD/LRR-repeat protein At3g59240 (504 aa).

The F-box domain maps to lysine 7 to serine 60. LRR repeat units follow at residues histidine 69–cysteine 95, arginine 145–serine 171, tryptophan 173–aspartate 198, threonine 286–cysteine 312, aspartate 329–glycine 354, cysteine 369–glutamate 396, and aspartate 403–tyrosine 428. In terms of domain architecture, FBD spans serine 382–histidine 427.

The protein is Putative F-box/FBD/LRR-repeat protein At3g59240 of Arabidopsis thaliana (Mouse-ear cress).